Reading from the N-terminus, the 214-residue chain is NAD(P)H-quinone oxidoreductase subunit 5, chloroplastic (214 aa).

Helical transmembrane passes span 84-104 and 152-172; these read LFPL…GIPF and SLAI…YSFF.

Belongs to the complex I subunit 5 family. As to quaternary structure, NDH is composed of at least 16 different subunits, 5 of which are encoded in the nucleus.

Its subcellular location is the plastid. It localises to the chloroplast thylakoid membrane. The enzyme catalyses a plastoquinone + NADH + (n+1) H(+)(in) = a plastoquinol + NAD(+) + n H(+)(out). It carries out the reaction a plastoquinone + NADPH + (n+1) H(+)(in) = a plastoquinol + NADP(+) + n H(+)(out). NDH shuttles electrons from NAD(P)H:plastoquinone, via FMN and iron-sulfur (Fe-S) centers, to quinones in the photosynthetic chain and possibly in a chloroplast respiratory chain. The immediate electron acceptor for the enzyme in this species is believed to be plastoquinone. Couples the redox reaction to proton translocation, and thus conserves the redox energy in a proton gradient. In Brachypodium sylvaticum (False brome), this protein is NAD(P)H-quinone oxidoreductase subunit 5, chloroplastic (ndhF).